We begin with the raw amino-acid sequence, 314 residues long: Small ribosomal subunit biogenesis GTPase RsgA (314 aa).

The disordered stretch occupies residues 1 to 20 (MKRAPTKQPAKPAARGGERA). The region spanning 85 to 246 (SDQFKSKLFA…LIDSPGFQEF (162 aa)) is the CP-type G domain. GTP-binding positions include 134–137 (NKID) and 188–196 (GQSGMGKST). The Zn(2+) site is built by C270, C275, H277, and C283.

The protein belongs to the TRAFAC class YlqF/YawG GTPase family. RsgA subfamily. In terms of assembly, monomer. Associates with 30S ribosomal subunit, binds 16S rRNA. Requires Zn(2+) as cofactor.

Its subcellular location is the cytoplasm. Its function is as follows. One of several proteins that assist in the late maturation steps of the functional core of the 30S ribosomal subunit. Helps release RbfA from mature subunits. May play a role in the assembly of ribosomal proteins into the subunit. Circularly permuted GTPase that catalyzes slow GTP hydrolysis, GTPase activity is stimulated by the 30S ribosomal subunit. This Burkholderia pseudomallei (strain K96243) protein is Small ribosomal subunit biogenesis GTPase RsgA.